The primary structure comprises 262 residues: MLQYPQIDPVALRIGPLAIHWYGLMYLIGFALVYALGRRRITSGHTTSMTVRDLEDLIFYSVLGVVLGGRLGYVLFYKPAHYLANPLEIFYLWEGGMSFHGGLIGVIVVMLLFAHKKRLGFFTVSDFIAPLIPLGLAAGRLGNFINGELWGRPTDVPWAMVFPQSGDGLPRHPSQLYELGLEGIVLFALLWWYSSKPRAAGQVSAMFLMGYGAFRFLVEFTREPDNFLGLLAAGLSMGQWLSIPMVLAGAGLYLFTARPPSR.

4 helical membrane-spanning segments follow: residues 17 to 37 (LAIH…YALG), 57 to 77 (LIFY…VLFY), 95 to 115 (GGMS…LFAH), and 119 to 139 (LGFF…LAAG). Residue Arg140 participates in a 1,2-diacyl-sn-glycero-3-phospho-(1'-sn-glycerol) binding. Transmembrane regions (helical) follow at residues 173–193 (PSQL…LWWY), 200–220 (AGQV…LVEF), and 227–247 (FLGL…PMVL).

This sequence belongs to the Lgt family.

It localises to the cell inner membrane. It carries out the reaction L-cysteinyl-[prolipoprotein] + a 1,2-diacyl-sn-glycero-3-phospho-(1'-sn-glycerol) = an S-1,2-diacyl-sn-glyceryl-L-cysteinyl-[prolipoprotein] + sn-glycerol 1-phosphate + H(+). The protein operates within protein modification; lipoprotein biosynthesis (diacylglyceryl transfer). Functionally, catalyzes the transfer of the diacylglyceryl group from phosphatidylglycerol to the sulfhydryl group of the N-terminal cysteine of a prolipoprotein, the first step in the formation of mature lipoproteins. This chain is Phosphatidylglycerol--prolipoprotein diacylglyceryl transferase, found in Bordetella bronchiseptica (strain ATCC BAA-588 / NCTC 13252 / RB50) (Alcaligenes bronchisepticus).